Consider the following 334-residue polypeptide: Glycerol-3-phosphate dehydrogenase [NAD(P)+] (334 aa).

NADPH is bound by residues Ser14, Tyr15, His35, and Lys109. 3 residues coordinate sn-glycerol 3-phosphate: Lys109, Gly138, and Thr140. Position 142 (Ala142) interacts with NADPH. Sn-glycerol 3-phosphate-binding residues include Lys194, Asp247, Ser257, Arg258, and Asn259. The active-site Proton acceptor is Lys194. Residue Arg258 coordinates NADPH. Residues Val282 and Glu284 each coordinate NADPH.

The protein belongs to the NAD-dependent glycerol-3-phosphate dehydrogenase family.

The protein resides in the cytoplasm. The catalysed reaction is sn-glycerol 3-phosphate + NAD(+) = dihydroxyacetone phosphate + NADH + H(+). The enzyme catalyses sn-glycerol 3-phosphate + NADP(+) = dihydroxyacetone phosphate + NADPH + H(+). Its pathway is membrane lipid metabolism; glycerophospholipid metabolism. Catalyzes the reduction of the glycolytic intermediate dihydroxyacetone phosphate (DHAP) to sn-glycerol 3-phosphate (G3P), the key precursor for phospholipid synthesis. The sequence is that of Glycerol-3-phosphate dehydrogenase [NAD(P)+] from Aeromonas hydrophila subsp. hydrophila (strain ATCC 7966 / DSM 30187 / BCRC 13018 / CCUG 14551 / JCM 1027 / KCTC 2358 / NCIMB 9240 / NCTC 8049).